The chain runs to 416 residues: MQQTAALPKRLSCDRCYAQKLRCPRPSTNDDASCIRCLRQKVQCVYSTALPKGRPRAAVRACAAGAGATAGAPPITTTTTTAAPSSSDTAPPIFSTEDLASLTGLSTSGWLPDPTWEDSFCFLSSQVVPQPPPLDTTPPPRSLSASGLDNPENCVGRLSDLATRLHAVYQTTRALSDHPLITNAAFEAVTTLFNAPLSPPSAATTAATTNLRETFTSSRHLLETISHLLWATPNNNPSTAPAAAADETVIYHFTIACYSLLLLIYATLLTALHRDALTHTQPSLSTTTTTTGPDNNTSTWCSAPSLVELRLVLLFHMITYFLDRLQQMIRMYTAEFEKQASNSTTGRRPPTSGRWSEEVEEMMVVEEPWEREQHIPPPPPPTSSLGSISELETQARAALMQLRMSLVATRGGLVDN.

The segment at residues 13–44 is a DNA-binding region (zn(2)-C6 fungal-type); the sequence is CDRCYAQKLRCPRPSTNDDASCIRCLRQKVQC. Disordered regions lie at residues 68–90 and 130–150; these read ATAGAPPITTTTTTAAPSSSDTA and QPPPLDTTPPPRSLSASGLDN. A compositionally biased stretch (pro residues) spans 130-141; it reads QPPPLDTTPPPR. The next 2 helical transmembrane spans lie at 249 to 269 and 302 to 322; these read VIYHFTIACYSLLLLIYATLL and SAPSLVELRLVLLFHMITYFL.

The protein resides in the membrane. The protein localises to the nucleus. In terms of biological role, transcription factor that positively regulates the expression of the gene cluster that mediates the biosynthesis of the acyltetronic acid derivatives carlosic acid, agglomerin F and carlosic acid methyl ether. This chain is Transcription factor caaR, found in Aspergillus niger (strain ATCC MYA-4892 / CBS 513.88 / FGSC A1513).